A 1368-amino-acid polypeptide reads, in one-letter code: MASWLYECLCEAELAQYYSHFTALGLQKIDELAKITMKDYSKLGVHDMNDRKRLFQLIKIIKIMQEEDKAVSIPERHLQTSSLRIKSQELRSGPRRQLNFDSPADNKDRNASNDGFEMCSLSDFSANEQKSTYLKVLEHMLPDDSQYHTKTGILNATAGDSYVQTEISTSLFSPNYLSAILGDCDIPIIQRISHVSGYNYGIPHSCIRQNTSEKQNPWTEMEKIRVCVRKRPLGMREVRRGEINIITVEDKETLLVHEKKEAVDLTQYILQHVFYFDEVFGEACTNQDVYMKTTHPLIQHIFNGGNATCFAYGQTGAGKTYTMIGTHENPGLYALAAKDIFRQLEVSQPRKHLFVWISFYEIYCGQLYDLLNRRKRLFAREDSKHMVQIVGLQELQVDSVELLLEVILKGSKERSTGATGVNADSSRSHAVIQIQIKDSAKRTFGRISFIDLAGSERAADARDSDRQTKMEGAEINQSLLALKECIRALDQEHTHTPFRQSKLTQVLKDSFIGNAKTCMIANISPSHVATEHTLNTLRYADRVKELKKGIKCCTSVTSRNRTSGNSSPKRIQSSPGALSEDKCSPKKVKLGFQQSLTVAAPGSTRGKVHPLTSHPPNIPFTSAPKVSGKRGGSRGSPSQEWVIHASPVKGTVRSGHVAKKKPEESAPLCSEKNRMGNKTVLGWESRASGPGEGLVRGKLSTKCKKVQTVQPVQKQLVSRVELSFGNAHHRAEYSQDSQRGTPARPASEAWTNIPPHQKEREEHLRFYHQQFQQPPLLQQKLKYQPLKRSLRQYRPPEGQLTNETPPLFHSYSENHDGAQVEELDDSDFSEDSFSHISSQRATKQRNTLENSEDSFFLHQTWGQGPEKQVAERQQSLFSSPRTGDKKDLTKSWVDSRDPINHRRAALDHSCSPSKGPVDWSRENSTSSGPSPRDSLAEKPYCSQVDFIYRQERGGGSSFDLRKDASQSEVSGENEGNLPSPEEDGFTISLSHVAVPGSPDQRDTVTTPLREVSADGPIQVTSTVKNGHAVPGEDPRGQLGTHAEYASGLMSPLTMSLLENPDNEGSPPSEQLVQDGATHSLVAESTGGPVVSHTVPSGDQEAALPVSSATRHLWLSSSPPDNKPGGDLPALSPSPIRQHPADKLPSREADLGEACQSRETVLFSHEHMGSEQYDADAEETGLDGSWGFPGKPFTTIHMGVPHSGPTLTPRTGSSDVADQLWAQERKHPTRLGWQEFGLSTDPIKLPCNSENVTWLKPRPISRCLARPSSPLVPSCSPKTAGTLRQPTLEQAQQVVIRAHQEQLDEMAELGFKEETLMSQLASNDFEDFVTQLDEIMVLKSKCIQSLRSQLQLYLTCHGPTAAPEGTVPS.

Residues 1 to 64 enclose the SAM domain; sequence MASWLYECLC…FQLIKIIKIM (64 aa). The tract at residues 89–112 is disordered; the sequence is ELRSGPRRQLNFDSPADNKDRNAS. A phosphoserine mark is found at serine 102 and serine 112. The 324-residue stretch at 223-546 folds into the Kinesin motor domain; sequence KIRVCVRKRP…LRYADRVKEL (324 aa). 313 to 320 provides a ligand contact to ATP; that stretch reads GQTGAGKT. Phosphoserine is present on serine 478. Residues 478–709 form an interaction with MPHOSPH9 region; that stretch reads SLLALKECIR…STKCKKVQTV (232 aa). A compositionally biased stretch (polar residues) spans 557–576; the sequence is TSRNRTSGNSSPKRIQSSPG. Disordered regions lie at residues 557 to 584 and 602 to 639; these read TSRNRTSGNSSPKRIQSSPGALSEDKCS and GSTRGKVHPLTSHPPNIPFTSAPKVSGKRGGSRGSPSQ. Residue serine 584 is modified to Phosphoserine. Position 621 is a phosphothreonine; by NEK2 (threonine 621). The residue at position 622 (serine 622) is a Phosphoserine; by NEK2. Serine 646 bears the Phosphoserine mark. 5 disordered regions span residues 651–670, 729–753, 792–849, 864–938, and 952–984; these read TVRSGHVAKKKPEESAPLCS, HRAEYSQDSQRGTPARPASEAWTNI, QYRP…NTLE, GPEK…LAEK, and RGGGSSFDLRKDASQSEVSGENEGNLPSPEEDG. Residues 819-830 show a composition bias toward acidic residues; sequence QVEELDDSDFSE. Residues serine 826 and serine 829 each carry the phosphoserine modification. 2 stretches are compositionally biased toward polar residues: residues 839-849 and 871-881; these read QRATKQRNTLE and ERQQSLFSSPR. A compositionally biased stretch (basic and acidic residues) spans 882-906; sequence TGDKKDLTKSWVDSRDPINHRRAAL. At serine 1012 the chain carries Phosphoserine. Disordered regions lie at residues 1054 to 1073 and 1086 to 1148; these read MSLLENPDNEGSPPSEQLVQ and GGPV…SREA. A compositionally biased stretch (polar residues) spans 1106–1119; sequence SSATRHLWLSSSPP. Positions 1138–1148 are enriched in basic and acidic residues; that stretch reads HPADKLPSREA.

It belongs to the TRAFAC class myosin-kinesin ATPase superfamily. Kinesin family. Interacts with CCP110, CEP97, TALPID3. Interacts with MPHOSPH9.

It localises to the cytoplasm. The protein localises to the cytoskeleton. Its subcellular location is the microtubule organizing center. It is found in the centrosome. The protein resides in the centriole. Functionally, microtubule-dependent motor protein that acts as a negative regulator of ciliogenesis by mediating recruitment of CCP110 to mother centriole in cycling cells, leading to restrict nucleation of cilia at centrioles. Mediates depolymerization of microtubules of centriolar origin, possibly to suppress aberrant cilia formation. Following activation by NEK2 involved in disassembly of primary cilium during G2/M phase but does not disassemble fully formed ciliary axonemes. As cilium assembly and disassembly is proposed to coexist in a dynamic equilibrium may suppress nascent cilium assembly and, potentially, ciliar re-assembly in cells that have already disassembled their cilia ensuring the completion of cilium removal in the later stages of the cell cycle. Plays an important role in recruiting MPHOSPH9, a negative regulator of cilia formation to the distal end of mother centriole. The sequence is that of Kinesin-like protein KIF24 (KIF24) from Homo sapiens (Human).